The following is a 98-amino-acid chain: uncharacterized protein (98 aa).

It belongs to the HesB/IscA family.

This is an uncharacterized protein from Staphylococcus epidermidis (strain ATCC 35984 / DSM 28319 / BCRC 17069 / CCUG 31568 / BM 3577 / RP62A).